The following is a 134-amino-acid chain: Putative pre-16S rRNA nuclease (134 aa).

The protein belongs to the YqgF nuclease family.

It is found in the cytoplasm. Could be a nuclease involved in processing of the 5'-end of pre-16S rRNA. This chain is Putative pre-16S rRNA nuclease, found in Helicobacter pylori (strain Shi470).